Reading from the N-terminus, the 495-residue chain is Myocyte-specific enhancer factor 2A (495 aa).

Positions 3 to 57 (RKKIQITRIMDERNRQVTFTKRKFGLMKKAYELSVLCDCEIALIIFNSSNKLFQY) constitute an MADS-box domain. Residues 58-86 (ASTDMDKVLLKYTEYNEPHESRTNSDIVE) constitute a DNA-binding region (mef2-type). Ser59 bears the Phosphoserine; by CK2 mark. Phosphoserine is present on Ser98. The disordered stretch occupies residues 175-225 (AESSMLSPPPATLHRNVSPGAPQRPPSTGSAGGMLSTTDLTVPNGAGNGPV). Ser235 is subject to Phosphoserine. The segment at 242-271 (TGANSVGKVMPTKSPPPPGGGSVGMNSRKP) is disordered. Lys249 carries the N6-acetyllysine modification. Ser255 is modified (phosphoserine). The segment at 266–283 (MNSRKPDLRVVIPPSSKG) is required for interaction with MAPKs. Phosphothreonine; by MAPK7 and MAPK14 is present on residues Thr304 and Thr311. Residue Ser347 is modified to Phosphoserine; by MAPK7. Over residues 382–394 (SNLSINTNQNINI) the composition is skewed to polar residues. Positions 382–495 (SNLSINTNQN…KRMRMDTWVT (114 aa)) are disordered. An N6-acetyllysine; alternate modification is found at Lys395. Residue Lys395 forms a Glycyl lysine isopeptide (Lys-Gly) (interchain with G-Cter in SUMO); alternate linkage. Ser400 is subject to Phosphoserine; by CDK5. Residue Thr407 is modified to Phosphothreonine. Pro residues predominate over residues 421 to 433 (QQPPPQPPQPQPQ). Ser441 carries the phosphoserine modification. A compositionally biased stretch (low complexity) spans 441–454 (SPVDSLSSSSSSYD). Composition is skewed to basic and acidic residues over residues 455-465 (GSDREDPRGDF) and 476-495 (NAEDRESPSVKRMRMDTWVT).

As to quaternary structure, binds DNA as a homo- or heterodimer. Dimerizes with MEF2D. Interacts with HDAC7. Interacts with PIAS1; the interaction enhances sumoylation. Interacts with HDAC4, HDAC9 and SLC2A4RG. Interacts (via the N-terminal) with MAPK7; the interaction results in the phosphorylation and transcriptional activity of MEF2A. Constitutive phosphorylation on Ser-400 promotes Lys-395 sumoylation thus preventing acetylation at this site. Dephosphorylation on Ser-400 by PPP3CA upon neuron depolarization promotes a switch from sumoylation to acetylation on residue Lys-395 leading to inhibition of dendrite claw differentiation. Phosphorylation on Thr-304 and Thr-311 are the main sites involved in p38 MAPK signaling and activate transcription. Phosphorylated on these sites by MAPK14/p38alpha and MAPK11/p38beta, but not by MAPK13/p38delta nor by MAPK12/p38gamma. Phosphorylation on Ser-400 by CDK5 induced by neurotoxicity inhibits MEF2A transcriptional activation leading to apoptosis of cortical neurons. Phosphorylation on Thr-304, Thr-311 and Ser-347 can be induced by EGF. Post-translationally, sumoylation on Lys-395 is enhanced by PIAS1 and represses transcriptional activity. Phosphorylation on Ser-400 is required for sumoylation. Has no effect on nuclear location nor on DNA binding. Sumoylated with SUMO1 and, to a lesser extent with SUMO2 and SUMO3. PIASx facilitates sumoylation in postsynaptic dendrites in the cerebellar cortex and promotes their morphogenesis. In terms of processing, acetylation on Lys-395 activates transcriptional activity. Acetylated by p300 on several sites in diffentiating myocytes. Acetylation on Lys-4 increases DNA binding and transactivation. Hyperacetylation by p300 leads to enhanced cardiac myocyte growth and heart failure. Proteolytically cleaved in cerebellar granule neurons on several sites by caspase 3 and caspase 7 following neurotoxicity. Preferentially cleaves the CDK5-mediated hyperphosphorylated form which leads to neuron apoptosis and transcriptional inactivation.

It is found in the nucleus. Its function is as follows. Transcriptional activator which binds specifically to the MEF2 element, 5'-YTA[AT](4)TAR-3', found in numerous muscle-specific genes. Also involved in the activation of numerous growth factor- and stress-induced genes. Mediates cellular functions not only in skeletal and cardiac muscle development, but also in neuronal differentiation and survival. Plays diverse roles in the control of cell growth, survival and apoptosis via p38 MAPK signaling in muscle-specific and/or growth factor-related transcription. In cerebellar granule neurons, phosphorylated and sumoylated MEF2A represses transcription of NUR77 promoting synaptic differentiation. Associates with chromatin to the ZNF16 promoter. The chain is Myocyte-specific enhancer factor 2A (Mef2a) from Rattus norvegicus (Rat).